The chain runs to 107 residues: Integration host factor subunit alpha (107 aa).

It belongs to the bacterial histone-like protein family. As to quaternary structure, heterodimer of an alpha and a beta chain.

In terms of biological role, this protein is one of the two subunits of integration host factor, a specific DNA-binding protein that functions in genetic recombination as well as in transcriptional and translational control. This is Integration host factor subunit alpha from Brucella anthropi (strain ATCC 49188 / DSM 6882 / CCUG 24695 / JCM 21032 / LMG 3331 / NBRC 15819 / NCTC 12168 / Alc 37) (Ochrobactrum anthropi).